We begin with the raw amino-acid sequence, 604 residues long: NRPS-independent siderophore synthetase-like protein ankE (604 aa).

The enzyme catalyses cyclo(L-arginyl-(Z)-dehydro-4-O-homoseryl-tyrosyl) + citrate + ATP = NK13650 B + AMP + diphosphate + H(+). It functions in the pathway secondary metabolite biosynthesis. NRPS-independent siderophore synthetase-like protein; part of the ank cluster that mediates the biosynthesis of NK13650 C, a highly modified cyclo-arginine-tyrosine dipeptide. AnkE is responsible of the production of NK13650 B via ligation of citrate to the ankD product. Within the pathway, the cyclodipeptide synthase ankA acts as the scaffold-generating enzyme and is responsible for formation of the cyclo-Arg-Tyr diketopiperazine (cRY) from L-Arg and L-Tyr. The ankA product cRY is desaturated by the cytochrome P450 monooxygenase ankB to yield a dehydro-cyclodipeptide intermediate. The FAD-dependent monooxygenase ankC then installs the m-OH, ankD catalyzes the attachment of L-homoserine, and ankE ligates citrate to the ankD product to yield NK13650 B. The O-methyltransferase ankF is responsible for methylation of the C-17 phenol group of NK13650 B to produce NK13650 D. Amidation of NK13650 D with L-Asp by ankG then leads to the production of NK13650 C, whereas amidation of NK13650 B produces NK13650 A. The polypeptide is NRPS-independent siderophore synthetase-like protein ankE (Aspergillus thermomutatus (Neosartorya pseudofischeri)).